Consider the following 935-residue polypeptide: Protein translocase subunit SecA (935 aa).

ATP-binding positions include Q90, 108–112 (GEGKT), and D504.

Belongs to the SecA family. Monomer and homodimer. Part of the essential Sec protein translocation apparatus which comprises SecA, SecYEG and auxiliary proteins SecDF. Other proteins may also be involved.

It localises to the cell inner membrane. The protein resides in the cellular thylakoid membrane. The protein localises to the cytoplasm. It carries out the reaction ATP + H2O + cellular proteinSide 1 = ADP + phosphate + cellular proteinSide 2.. Its function is as follows. Part of the Sec protein translocase complex. Interacts with the SecYEG preprotein conducting channel. Has a central role in coupling the hydrolysis of ATP to the transfer of proteins into and across the cell membrane, serving as an ATP-driven molecular motor driving the stepwise translocation of polypeptide chains across the membrane. Probably participates in protein translocation into and across both the cytoplasmic and thylakoid membranes in cyanobacterial cells. The chain is Protein translocase subunit SecA from Gloeothece citriformis (strain PCC 7424) (Cyanothece sp. (strain PCC 7424)).